A 586-amino-acid chain; its full sequence is 2-succinyl-5-enolpyruvyl-6-hydroxy-3-cyclohexene-1-carboxylate synthase (586 aa).

Belongs to the TPP enzyme family. MenD subfamily. As to quaternary structure, homodimer. Requires Mg(2+) as cofactor. It depends on Mn(2+) as a cofactor. Thiamine diphosphate is required as a cofactor.

It catalyses the reaction isochorismate + 2-oxoglutarate + H(+) = 5-enolpyruvoyl-6-hydroxy-2-succinyl-cyclohex-3-ene-1-carboxylate + CO2. The protein operates within quinol/quinone metabolism; 1,4-dihydroxy-2-naphthoate biosynthesis; 1,4-dihydroxy-2-naphthoate from chorismate: step 2/7. Its pathway is cofactor biosynthesis; phylloquinone biosynthesis. Catalyzes the thiamine diphosphate-dependent decarboxylation of 2-oxoglutarate and the subsequent addition of the resulting succinic semialdehyde-thiamine pyrophosphate anion to isochorismate to yield 2-succinyl-5-enolpyruvyl-6-hydroxy-3-cyclohexene-1-carboxylate (SEPHCHC). This chain is 2-succinyl-5-enolpyruvyl-6-hydroxy-3-cyclohexene-1-carboxylate synthase, found in Acaryochloris marina (strain MBIC 11017).